The primary structure comprises 307 residues: Oxygen-dependent coproporphyrinogen-III oxidase (307 aa).

Residue S99 coordinates substrate. H103 and H113 together coordinate a divalent metal cation. H113 serves as the catalytic Proton donor. Residue 115–117 (NVR) coordinates substrate. Residues H152 and H182 each coordinate a divalent metal cation. The important for dimerization stretch occupies residues 247–282 (YVEFNLVFDRGTLFGLQSGGRTESILMSMPPVVNWR). 265-267 (GGR) serves as a coordination point for substrate.

The protein belongs to the aerobic coproporphyrinogen-III oxidase family. As to quaternary structure, homodimer. It depends on a divalent metal cation as a cofactor.

The protein resides in the cytoplasm. It catalyses the reaction coproporphyrinogen III + O2 + 2 H(+) = protoporphyrinogen IX + 2 CO2 + 2 H2O. It participates in porphyrin-containing compound metabolism; protoporphyrin-IX biosynthesis; protoporphyrinogen-IX from coproporphyrinogen-III (O2 route): step 1/1. Involved in the heme biosynthesis. Catalyzes the aerobic oxidative decarboxylation of propionate groups of rings A and B of coproporphyrinogen-III to yield the vinyl groups in protoporphyrinogen-IX. The sequence is that of Oxygen-dependent coproporphyrinogen-III oxidase from Paraburkholderia xenovorans (strain LB400).